The following is a 358-amino-acid chain: Pituitary-specific positive transcription factor 1 (358 aa).

Positions alanine 5 to threonine 12 match the 9aaTAD motif. A disordered region spans residues proline 164–proline 195. Over residues lysine 177–aspartate 187 the composition is skewed to basic and acidic residues. The 75-residue stretch at methionine 192–glutamate 266 folds into the POU-specific domain. The homeobox DNA-binding region spans lysine 282 to lysine 341.

This sequence belongs to the POU transcription factor family. Class-1 subfamily.

The protein resides in the nucleus. Transcription factor that activates growth hormone and prolactin genes. Specifically binds to the consensus sequence 5'-TAAAT-3'. The sequence is that of Pituitary-specific positive transcription factor 1 (pou1f1) from Oncorhynchus mykiss (Rainbow trout).